The following is a 416-amino-acid chain: Cysteate synthase (416 aa).

An N6-(pyridoxal phosphate)lysine modification is found at Lys-104. Position 130 (Asn-130) interacts with pyridoxal 5'-phosphate.

This sequence belongs to the threonine synthase family. Cysteate synthase subfamily. In terms of assembly, homotrimer. It depends on pyridoxal 5'-phosphate as a cofactor.

It catalyses the reaction O-phospho-L-serine + sulfite + H(+) = L-cysteate + phosphate. It functions in the pathway cofactor biosynthesis; coenzyme M biosynthesis. Functionally, specifically catalyzes the beta-elimination of phosphate from L-phosphoserine and the beta-addition of sulfite to the dehydroalanine intermediate to produce L-cysteate. This is Cysteate synthase from Methanosarcina mazei (strain ATCC BAA-159 / DSM 3647 / Goe1 / Go1 / JCM 11833 / OCM 88) (Methanosarcina frisia).